Here is a 430-residue protein sequence, read N- to C-terminus: Divergent protein kinase domain 2A (430 aa).

Positions 1-35 (MWRLVPLKLGRLSRALKLAALGSLLVLMLLHSPSL) are cleaved as a signal peptide.

The protein belongs to the DIPK family. As to expression, expressed in heart, brain, liver, spleen, kidney, lung, thymus, testis, ovary and muscle.

Its subcellular location is the golgi apparatus. The protein resides in the cytoplasmic vesicle. The protein localises to the COPI-coated vesicle. It localises to the secreted. May play a role in cardiomyocyte proliferation through paracrine signaling and activation of the PI3-kinase signaling cascade. The protein is Divergent protein kinase domain 2A (Dipk2a) of Mus musculus (Mouse).